A 738-amino-acid polypeptide reads, in one-letter code: MGRYELHYGGDRRNNAPAMRRDYNGGLIAFSRYFSFFSSRTCSPESSINNQFRLLCITCDTLTTTHNFSQLLRQCIDERSISGIKTIQAHMLKSGFPAEISGSKLVDASLKCGDIDYARQVFDGMSERHIVTWNSLIAYLIKHRRSKEAVEMYRLMITNNVLPDEYTLSSVFKAFSDLSLEKEAQRSHGLAVILGLEVSNVFVGSALVDMYVKFGKTREAKLVLDRVEEKDVVLITALIVGYSQKGEDTEAVKAFQSMLVEKVQPNEYTYASVLISCGNLKDIGNGKLIHGLMVKSGFESALASQTSLLTMYLRCSLVDDSLRVFKCIEYPNQVSWTSLISGLVQNGREEMALIEFRKMMRDSIKPNSFTLSSALRGCSNLAMFEEGRQIHGIVTKYGFDRDKYAGSGLIDLYGKCGCSDMARLVFDTLSEVDVISLNTMIYSYAQNGFGREALDLFERMINLGLQPNDVTVLSVLLACNNSRLVEEGCELFDSFRKDKIMLTNDHYACMVDLLGRAGRLEEAEMLTTEVINPDLVLWRTLLSACKVHRKVEMAERITRKILEIEPGDEGTLILMSNLYASTGKWNRVIEMKSKMKDMKLKKNPAMSWVEINKETHTFMAGDLFSHPNSEQILENLEELIKKSKDLGYVEDKSCVFQDMEETAKERSLHQHSEKLAIAFAVWRNVGGSIRILKNLRVCVDCHSWIKIVSRVMKREIICRDSKRFHHFRDGSCSCGDYW.

13 PPR repeats span residues 98 to 128 (AEISGSKLVDASLKCGDIDYARQVFDGMSER), 129 to 163 (HIVTWNSLIAYLIKHRRSKEAVEMYRLMITNNVLP), 164 to 198 (DEYTLSSVFKAFSDLSLEKEAQRSHGLAVILGLEV), 200 to 230 (NVFVGSALVDMYVKFGKTREAKLVLDRVEEK), 231 to 265 (DVVLITALIVGYSQKGEDTEAVKAFQSMLVEKVQP), 266 to 300 (NEYTYASVLISCGNLKDIGNGKLIHGLMVKSGFES), 301 to 331 (ALASQTSLLTMYLRCSLVDDSLRVFKCIEYP), 332 to 366 (NQVSWTSLISGLVQNGREEMALIEFRKMMRDSIKP), 367 to 401 (NSFTLSSALRGCSNLAMFEEGRQIHGIVTKYGFDR), 402 to 432 (DKYAGSGLIDLYGKCGCSDMARLVFDTLSEV), 433 to 467 (DVISLNTMIYSYAQNGFGREALDLFERMINLGLQP), 468 to 502 (NDVTVLSVLLACNNSRLVEEGCELFDSFRKDKIML), and 503 to 537 (TNDHYACMVDLLGRAGRLEEAEMLTTEVINPDLVL). The type E motif stretch occupies residues 537 to 612 (LWRTLLSACK…NPAMSWVEIN (76 aa)). Residues 613–644 (KETHTFMAGDLFSHPNSEQILENLEELIKKSK) form a type E(+) motif region. The tract at residues 645 to 738 (DLGYVEDKSC…DGSCSCGDYW (94 aa)) is type DYW motif.

It belongs to the PPR family. PCMP-H subfamily.

The sequence is that of Pentatricopeptide repeat-containing protein At5g65570 (PCMP-H47) from Arabidopsis thaliana (Mouse-ear cress).